A 175-amino-acid chain; its full sequence is Adenylyl-sulfate kinase (175 aa).

G12–T19 is an ATP binding site. Residue S86 is the Phosphoserine intermediate of the active site.

Belongs to the APS kinase family.

It catalyses the reaction adenosine 5'-phosphosulfate + ATP = 3'-phosphoadenylyl sulfate + ADP + H(+). It functions in the pathway sulfur metabolism; hydrogen sulfide biosynthesis; sulfite from sulfate: step 2/3. Its function is as follows. Catalyzes the synthesis of activated sulfate. This Synechococcus sp. (strain JA-2-3B'a(2-13)) (Cyanobacteria bacterium Yellowstone B-Prime) protein is Adenylyl-sulfate kinase.